The chain runs to 192 residues: Xanthine phosphoribosyltransferase (192 aa).

Xanthine contacts are provided by L20 and T26. 5-phospho-alpha-D-ribose 1-diphosphate is bound at residue A127–A131. K155 provides a ligand contact to xanthine.

Belongs to the purine/pyrimidine phosphoribosyltransferase family. Xpt subfamily. In terms of assembly, homodimer.

Its subcellular location is the cytoplasm. It carries out the reaction XMP + diphosphate = xanthine + 5-phospho-alpha-D-ribose 1-diphosphate. Its pathway is purine metabolism; XMP biosynthesis via salvage pathway; XMP from xanthine: step 1/1. Functionally, converts the preformed base xanthine, a product of nucleic acid breakdown, to xanthosine 5'-monophosphate (XMP), so it can be reused for RNA or DNA synthesis. This Streptococcus thermophilus protein is Xanthine phosphoribosyltransferase.